We begin with the raw amino-acid sequence, 143 residues long: NADH-quinone oxidoreductase subunit A (143 aa).

3 consecutive transmembrane segments (helical) span residues 8–28 (FGNV…GYLT), 63–83 (FYVV…LFPW), and 93–113 (FALI…VYAW).

The protein belongs to the complex I subunit 3 family. In terms of assembly, NDH-1 is composed of 14 different subunits. Subunits NuoA, H, J, K, L, M, N constitute the membrane sector of the complex.

It is found in the cell inner membrane. It carries out the reaction a quinone + NADH + 5 H(+)(in) = a quinol + NAD(+) + 4 H(+)(out). In terms of biological role, NDH-1 shuttles electrons from NADH, via FMN and iron-sulfur (Fe-S) centers, to quinones in the respiratory chain. The immediate electron acceptor for the enzyme in this species is believed to be a menaquinone. Couples the redox reaction to proton translocation (for every two electrons transferred, four hydrogen ions are translocated across the cytoplasmic membrane), and thus conserves the redox energy in a proton gradient. The chain is NADH-quinone oxidoreductase subunit A from Chlorobium luteolum (strain DSM 273 / BCRC 81028 / 2530) (Pelodictyon luteolum).